The sequence spans 130 residues: 3-aminoacrylate deaminase RutC (130 aa).

This sequence belongs to the RutC family.

The catalysed reaction is (Z)-3-aminoacrylate + H2O + H(+) = 3-oxopropanoate + NH4(+). Functionally, involved in pyrimidine catabolism. Catalyzes the deamination of 3-aminoacrylate to malonic semialdehyde, a reaction that can also occur spontaneously. RutC may facilitate the reaction and modulate the metabolic fitness, rather than catalyzing essential functions. This is 3-aminoacrylate deaminase RutC from Haliangium ochraceum (strain DSM 14365 / JCM 11303 / SMP-2).